We begin with the raw amino-acid sequence, 348 residues long: Short-wave-sensitive opsin 1 (348 aa).

The Extracellular portion of the chain corresponds to 1-33 (MRKMSEEEFYLFKNISSVGPWDGPQYHIAPVWA). An N-linked (GlcNAc...) asparagine glycan is attached at Asn14. A helical membrane pass occupies residues 34-58 (FYLQAAFMGTVFLIGFPLNAMVLVA). Topologically, residues 59–70 (TLRYKKLRQPLN) are cytoplasmic. Residues 71 to 96 (YILVNVSFGGFLLCIFSVFPVFVASC) form a helical membrane-spanning segment. The Extracellular segment spans residues 97–110 (NGYFVFGRHVCALE). A disulfide bridge connects residues Cys107 and Cys184. Residues 111 to 130 (GFLGTVAGLVTGWSLAFLAF) traverse the membrane as a helical segment. The Cytoplasmic segment spans residues 131–149 (ERYIVICKPFGNFRFSSKH). A helical transmembrane segment spans residues 150–173 (ALTVVLATWTIGIGVSIPPFFGWS). At 174 to 199 (RFIPEGLQCSCGPDWYTVGTKYRSES) the chain is on the extracellular side. Residues 200 to 227 (YTWFLFIFCFIVPLSLICFSYTQLLRAL) form a helical membrane-spanning segment. Topologically, residues 228 to 249 (KAVAAQQQESATTQKAEREVSR) are cytoplasmic. Residues 250–273 (MVVVMVGSFCVCYVPYAAFAMYMV) form a helical membrane-spanning segment. Residues 274-281 (NNRNHGLD) lie on the Extracellular side of the membrane. Residues 282 to 306 (LRLVTIPSFFSKSACIYNPIIYCFM) traverse the membrane as a helical segment. The residue at position 293 (Lys293) is an N6-(retinylidene)lysine. At 307–348 (NKQFQACIMKMVCGKAMTDESDTCSSQKTEVSTVSSTQVGPN) the chain is on the cytoplasmic side.

This sequence belongs to the G-protein coupled receptor 1 family. Opsin subfamily. Phosphorylated on some or all of the serine and threonine residues present in the C-terminal region.

It localises to the cell membrane. The protein resides in the photoreceptor inner segment. The protein localises to the cell projection. It is found in the cilium. Its subcellular location is the photoreceptor outer segment. It localises to the cytoplasm. The protein resides in the perinuclear region. In terms of biological role, visual pigments are the light-absorbing molecules that mediate vision. They consist of an apoprotein, opsin, covalently linked to cis-retinal. Required for the maintenance of cone outer segment organization in the ventral retina, but not essential for the maintenance of functioning cone photoreceptors. Involved in ensuring correct abundance and localization of retinal membrane proteins. May increase spectral sensitivity in dim light. This Pan paniscus (Pygmy chimpanzee) protein is Short-wave-sensitive opsin 1 (OPN1SW).